Consider the following 75-residue polypeptide: Sec-independent protein translocase protein TatA (75 aa).

Residues 1–21 (MFGLSPAQLIILLVVILLIFG) form a helical membrane-spanning segment.

The protein belongs to the TatA/E family. In terms of assembly, the Tat system comprises two distinct complexes: a TatABC complex, containing multiple copies of TatA, TatB and TatC subunits, and a separate TatA complex, containing only TatA subunits. Substrates initially bind to the TatABC complex, which probably triggers association of the separate TatA complex to form the active translocon.

The protein resides in the cell inner membrane. Functionally, part of the twin-arginine translocation (Tat) system that transports large folded proteins containing a characteristic twin-arginine motif in their signal peptide across membranes. TatA could form the protein-conducting channel of the Tat system. The protein is Sec-independent protein translocase protein TatA of Haemophilus influenzae (strain PittEE).